A 461-amino-acid polypeptide reads, in one-letter code: ATP synthase subunit beta (461 aa).

151–158 (GGAGVGKT) lines the ATP pocket.

It belongs to the ATPase alpha/beta chains family. In terms of assembly, F-type ATPases have 2 components, CF(1) - the catalytic core - and CF(0) - the membrane proton channel. CF(1) has five subunits: alpha(3), beta(3), gamma(1), delta(1), epsilon(1). CF(0) has three main subunits: a(1), b(2) and c(9-12). The alpha and beta chains form an alternating ring which encloses part of the gamma chain. CF(1) is attached to CF(0) by a central stalk formed by the gamma and epsilon chains, while a peripheral stalk is formed by the delta and b chains.

The protein resides in the cell inner membrane. The enzyme catalyses ATP + H2O + 4 H(+)(in) = ADP + phosphate + 5 H(+)(out). Functionally, produces ATP from ADP in the presence of a proton gradient across the membrane. The catalytic sites are hosted primarily by the beta subunits. The polypeptide is ATP synthase subunit beta (Coxiella burnetii (strain Dugway 5J108-111)).